The sequence spans 133 residues: MFDIGFWELVLIAIVALVVLGPERLPHAIRSVAKFVSAAKSMANSVKDELAHELKVQELQENLRKAEQMGMQNLSPELQKSVESLKQAAQEVQRPYAATPSSEASSTSSNPSSATEPDVRLDSASQPAEKKAE.

The helical transmembrane segment at Met1–Gly21 threads the bilayer. The tract at residues Glu67–Glu133 is disordered. A compositionally biased stretch (polar residues) spans Gly70 to Ser84. The segment covering Ala97–Glu116 has biased composition (low complexity).

This sequence belongs to the TatB family. In terms of assembly, the Tat system comprises two distinct complexes: a TatABC complex, containing multiple copies of TatA, TatB and TatC subunits, and a separate TatA complex, containing only TatA subunits. Substrates initially bind to the TatABC complex, which probably triggers association of the separate TatA complex to form the active translocon.

The protein resides in the cell inner membrane. Part of the twin-arginine translocation (Tat) system that transports large folded proteins containing a characteristic twin-arginine motif in their signal peptide across membranes. Together with TatC, TatB is part of a receptor directly interacting with Tat signal peptides. TatB may form an oligomeric binding site that transiently accommodates folded Tat precursor proteins before their translocation. The sequence is that of Sec-independent protein translocase protein TatB from Vibrio cholerae serotype O1 (strain ATCC 39315 / El Tor Inaba N16961).